A 175-amino-acid chain; its full sequence is MDKLADLNYTLSVITSMNDTLHSIIEDPGMAYFPYIASVLTVLFTLHKASIPTMKIALKASKCSYKVIKYCVVTIINTLLKLAGYKEQVTTKDEIEQQMDRIVKEMRRQLEMIDKLTTREIEQIELLKRIHDNLITRPVNVIDMSMEFNQKNIKTLDEWESRKNPYEPSEVTASM.

Topologically, residues 1-28 are lumenal; it reads MDKLADLNYTLSVITSMNDTLHSIIEDP. N-linked (GlcNAc...) asparagine; by host glycosylation is found at Asn8 and Asn18. A helical; Signal-anchor for type III membrane protein membrane pass occupies residues 29–51; that stretch reads GMAYFPYIASVLTVLFTLHKASI. Over 52–175 the chain is Cytoplasmic; the sequence is PTMKIALKAS…YEPSEVTASM (124 aa). Ca(2+) is bound by residues Glu120 and Gln123.

The protein belongs to the rotavirus NSP4 family. In terms of assembly, homotetramer. Interacts with the immature particle in the viroplasm. Interacts with host CAV1, early and late in infection. Interacts with host integrin ITGA1/ITGB1 heterodimer. Interacts with host integrin ITGA2/ITGB1 heterodimer. Interaction with microtubules blocks trafficking to the Golgi apparatus. In terms of processing, the N-glycosyl content is primarily Man(9)GlcNAc, with a small amount of Man(8)GlcNAc.

The protein resides in the host rough endoplasmic reticulum membrane. Its subcellular location is the host membrane. The protein localises to the host caveola. It is found in the secreted. Plays an essential role in the virus replication cycle by acting as a viroporin. Creates a pore in the host endoplasmic reticulum and as a consequence releases Ca(2+) in the cytoplasm of infected cell. In turn, high levels of cytoplasmic calcium trigger membrane trafficking and transport of viral ER-associated proteins to viroplasms, sites of viral genome replication and immature particle assembly. Functionally, the secreted form acts as an enterotoxin that causes phospholipase C-dependent elevation of the intracellular calcium concentration in host intestinal mucosa cells. Increased concentration of intracellular calcium disrupts the cytoskeleton and the tight junctions, raising the paracellular permeability. Potentiates chloride ion secretion through a calcium ion-dependent signaling pathway, inducing age-dependent diarrhea. To perform this enterotoxigenic role in vivo, NSP4 is released from infected enterocytes in a soluble form capable of diffusing within the intestinal lumen and interacting with host plasma membrane receptors on neighboring epithelial cells such as integrins ITGA1/ITGB1 and ITGA2/ITGB1. The chain is Non-structural glycoprotein 4 from Rotavirus A (strain RVA/Human/United Kingdom/ST3/1975/G4P2A[6]) (RV-A).